A 1334-amino-acid chain; its full sequence is Putative transmembrane protein ORF1334 (1334 aa).

A helical membrane pass occupies residues 53–73; sequence VSIVVLVLTLFIIPVIIPPAH. Residues 1107-1135 are disordered; sequence LSASTTPPSSTTPTPPSSSSSSSSSSSIS. Residues 1110–1135 show a composition bias toward low complexity; it reads STTPPSSTTPTPPSSSSSSSSSSSIS. 3 consecutive transmembrane segments (helical) span residues 1256 to 1276, 1292 to 1312, and 1313 to 1333; these read AVLPPIYALPLFLLFAGSFFI, IIYIFFVAPFLIVIGIPTSVV, and YGTVVGALIIIIIGLWASRSQ.

The protein localises to the host membrane. The sequence is that of Putative transmembrane protein ORF1334 from Acidianus two-tailed virus (ATV).